Reading from the N-terminus, the 290-residue chain is UPF0761 membrane protein YihY (290 aa).

6 helical membrane-spanning segments follow: residues 44–64, 104–124, 140–160, 183–203, 210–230, and 244–264; these read LLSLVPLIAVVFALFAAFPMF, VGACGLIVTALLLMYAIDSAL, FAVYWMILTLGPLLAGASLAI, ILPLLLSWISFWLLYSIVPTT, ALVGAFVAALLFEAGKKGFAL, and VLAVIPILFVWVYWTWCIVLL.

The protein belongs to the UPF0761 family.

The protein localises to the cell inner membrane. This chain is UPF0761 membrane protein YihY, found in Salmonella agona (strain SL483).